The following is a 1576-amino-acid chain: Proton channel OtopLc (1576 aa).

2 disordered regions span residues 1 to 602 (MDSS…SSPP) and 621 to 736 (QIGS…SSPV). Low complexity-rich tracts occupy residues 58-67 (SLAEEVLLLV) and 76-85 (LLGQPLPTLT). Acidic residues-rich tracts occupy residues 103-116 (DEGD…EPVP), 159-171 (DDGE…DAEE), 186-198 (SNPD…EEQE), and 206-216 (PKEEDEEEDDD). Positions 219-228 (TPPPPLPPLP) are enriched in pro residues. Residues 229–241 (SNFSYVQGHNLGQ) show a composition bias toward polar residues. N-linked (GlcNAc...) asparagine glycosylation is present at Asn230. The span at 243–252 (TPPLTKSPSN) shows a compositional bias: low complexity. Residues 253-264 (SPSPPVTPPPCP) show a composition bias toward pro residues. An N-linked (GlcNAc...) asparagine glycan is attached at Asn267. Acidic residues predominate over residues 316-341 (DQPEPEDQPPEPENEPEPEPEPEPEP). Over residues 347 to 356 (AREDYSRSLD) the composition is skewed to basic and acidic residues. Polar residues predominate over residues 362 to 376 (TTITTPPSNGYSASS). Residues 384 to 393 (HFAELDEDRG) are compositionally biased toward basic and acidic residues. Acidic residues predominate over residues 402-419 (QEPEEEVEEEEEEEEEEL). Residues 420–433 (TKETDEISVDRESL) are compositionally biased toward basic and acidic residues. Residues 434 to 457 (QDQGGDSISSPRPASILTGSISTS) are compositionally biased toward polar residues. The segment covering 465-507 (SPKPESRGPSRSGSQRSQLRSGSQQGSIAESRGGSRIGSRTGS) has biased composition (low complexity). Polar residues-rich tracts occupy residues 519-534 (PQAS…SQGQ) and 545-555 (KSGSQRMQSPQ). Pro residues predominate over residues 563–575 (MPSPPLMRSPPPE). Positions 661–685 (AAAAPAVTTTAATTAVTSQPRSHFT) are enriched in low complexity. Residues 686-709 (SSHHHYHLPHQFQHPHHQNHHTHS) are compositionally biased toward basic residues. A helical membrane pass occupies residues 741 to 761 (LFMAGVAPPIAAGAGSLMAMP). The tract at residues 771 to 845 (GRVSARSGSQ…GSSSQPALSG (75 aa)) is disordered. Positions 776 to 799 (RSGSQHHVTIDESSLPSHKGNIQE) are enriched in polar residues. The segment covering 826-839 (DSSDPPSSPGGSSS) has biased composition (low complexity). A run of 2 helical transmembrane segments spans residues 891 to 911 (ALAT…GIAF) and 931 to 951 (LYLY…LIWG). The segment covering 962-973 (PSKSATKASGTD) has biased composition (polar residues). The interval 962-1001 (PSKSATKASGTDSMDESDTDSNSVHHRLPPPIPVRRPSLL) is disordered. The next 3 membrane-spanning stretches (helical) occupy residues 1019–1039 (GAVA…GQYF), 1051–1071 (LLAL…YFIF), and 1084–1104 (IIAR…WLNV). Asn1121 is a glycosylation site (N-linked (GlcNAc...) asparagine). 7 consecutive transmembrane segments (helical) span residues 1179-1199 (FLFP…YVMW), 1239-1259 (FVGI…FVLI), 1272-1292 (VTIC…VGMI), 1310-1330 (ILLV…VIAG), 1340-1360 (LVPI…MFIL), 1381-1401 (IVTF…LEKS), and 1412-1432 (FYGL…AIFY). Asn1479 carries an N-linked (GlcNAc...) asparagine glycan. The tract at residues 1498–1549 (EEVDSGESNSAEDAGAGAGSGGSRGSGGGAGAAEAGEAGEEGQQGGDSSCGL) is disordered. Over residues 1503-1512 (GESNSAEDAG) the composition is skewed to low complexity. Residues 1513 to 1528 (AGAGSGGSRGSGGGAG) show a composition bias toward gly residues.

Belongs to the otopetrin family.

The protein localises to the cell membrane. Its function is as follows. Proton-selective channel that specifically transports protons into cells. Proton-selective channel activity is probably required in cell types that use changes in intracellular pH for cell signaling or to regulate biochemical or developmental processes. The sequence is that of Proton channel OtopLc from Drosophila melanogaster (Fruit fly).